The chain runs to 227 residues: Testis expressed protein 56 (227 aa).

As to expression, expressed predominantly in the testis.

This chain is Testis expressed protein 56, found in Mus musculus (Mouse).